The sequence spans 378 residues: uncharacterized protein (378 aa).

The span at 150–176 shows a compositional bias: low complexity; it reads TTTATTSNNRFNNNNSNNNNINNNNDN. Residues 150 to 187 are disordered; it reads TTTATTSNNRFNNNNSNNNNINNNNDNNNKEQKKESRC. Basic and acidic residues predominate over residues 177–187; that stretch reads NNKEQKKESRC.

This is an uncharacterized protein from Dictyostelium discoideum (Social amoeba).